A 432-amino-acid chain; its full sequence is D-amino acid dehydrogenase (432 aa).

3 to 17 (VVILGSGVVGVTSAW) lines the FAD pocket.

This sequence belongs to the DadA oxidoreductase family. FAD serves as cofactor.

The enzyme catalyses a D-alpha-amino acid + A + H2O = a 2-oxocarboxylate + AH2 + NH4(+). It functions in the pathway amino-acid degradation; D-alanine degradation; NH(3) and pyruvate from D-alanine: step 1/1. Functionally, oxidative deamination of D-amino acids. The sequence is that of D-amino acid dehydrogenase from Salmonella paratyphi C (strain RKS4594).